We begin with the raw amino-acid sequence, 432 residues long: UDP-N-acetylmuramoylalanine--D-glutamate ligase (432 aa).

ATP is bound at residue 98–104; the sequence is GTNGKST.

This sequence belongs to the MurCDEF family.

The protein localises to the cytoplasm. It catalyses the reaction UDP-N-acetyl-alpha-D-muramoyl-L-alanine + D-glutamate + ATP = UDP-N-acetyl-alpha-D-muramoyl-L-alanyl-D-glutamate + ADP + phosphate + H(+). The protein operates within cell wall biogenesis; peptidoglycan biosynthesis. Its function is as follows. Cell wall formation. Catalyzes the addition of glutamate to the nucleotide precursor UDP-N-acetylmuramoyl-L-alanine (UMA). In Fusobacterium nucleatum subsp. nucleatum (strain ATCC 25586 / DSM 15643 / BCRC 10681 / CIP 101130 / JCM 8532 / KCTC 2640 / LMG 13131 / VPI 4355), this protein is UDP-N-acetylmuramoylalanine--D-glutamate ligase.